Consider the following 141-residue polypeptide: MAYRLITQVVVVGSRVLGRAFAEAYKQAAASSQYQRAQQKNGNAATGRASLTSGMTLDEACKILNVNKPADGTAANMEEVMERFKRLFDANDPEKGGSFYLQSKVVRARERLEAEIKPKMEEKQAEEEVKEGWNPKIYKDR.

The interval 59–117 is J-like; it reads EACKILNVNKPADGTAANMEEVMERFKRLFDANDPEKGGSFYLQSKVVRARERLEAEIK. The segment at 119–141 is disordered; that stretch reads KMEEKQAEEEVKEGWNPKIYKDR.

Belongs to the TIM16/PAM16 family. In terms of assembly, heterodimer with tim14/pam18. Component of the PAM complex, at least composed of hsp70-5/ssc1, grpe/mge1, tim44, un-4/pam16, pam17 and tim14/pam18.

Its subcellular location is the mitochondrion inner membrane. Essential component of the PAM complex, a complex required for the translocation of transit peptide-containing proteins from the inner membrane into the mitochondrial matrix in an ATP-dependent manner. In the complex, it is required to regulate activity of mtHSP70 (hsp70-5) via its interaction with tim14/pam18. May act by positioning tim14/pam18 in juxtaposition to mtHSP70 at the translocon to maximize ATPase stimulation. This Neurospora crassa (strain ATCC 24698 / 74-OR23-1A / CBS 708.71 / DSM 1257 / FGSC 987) protein is Mitochondrial import inner membrane translocase subunit tim16 (un-4).